The chain runs to 270 residues: MSRLQTRFAQLKEQNRAALVTFVTAGDPNYDTSLAILKGLPAAGADVIELGMPFTDPMADGPAIQLANIRALGAKQNLAKTLQMVREFREGNSDTPLVLMGYFNPIHHYGVPRFIADAKAAGVDGLIVVDMPPEHNSELCDPAQAAGIDFIRLTTPTTDDARLPKVLDGSSGFVYYVSVAGVTGAGAATLEHVEEAVARLRRHTDLPISIGFGIRTPEQAAAIARLADGVVVGSALIDHIASAESSEQAVDGVLSLCAALSEGVRKARVS.

Catalysis depends on proton acceptor residues Glu49 and Asp60.

This sequence belongs to the TrpA family. Tetramer of two alpha and two beta chains.

It carries out the reaction (1S,2R)-1-C-(indol-3-yl)glycerol 3-phosphate + L-serine = D-glyceraldehyde 3-phosphate + L-tryptophan + H2O. The protein operates within amino-acid biosynthesis; L-tryptophan biosynthesis; L-tryptophan from chorismate: step 5/5. The alpha subunit is responsible for the aldol cleavage of indoleglycerol phosphate to indole and glyceraldehyde 3-phosphate. This chain is Tryptophan synthase alpha chain, found in Pseudomonas fluorescens (strain ATCC BAA-477 / NRRL B-23932 / Pf-5).